A 397-amino-acid polypeptide reads, in one-letter code: Lysosomal acid lipase/cholesteryl ester hydrolase (397 aa).

An N-terminal signal peptide occupies residues 1–25; that stretch reads MQLLGRVICFVVGILLSGGPTGTIS. A propeptide spans 26–72 (removed in mature form); sequence AVDPEANMNVTEIIMHWGYPEHSVQTGDGYILGVHRIPHGRKNQFDK. N-linked (GlcNAc...) asparagine glycosylation is found at Asn34, Asn99, and Asn159. Residues 84-378 form the AB hydrolase-1 domain; that stretch reads HGFLADSSNW…EWDHLDFIWG (295 aa). Ser172 functions as the Charge relay system in the catalytic mechanism. Asn271 and Asn319 each carry an N-linked (GlcNAc...) asparagine glycan. Residue His372 is the Charge relay system of the active site.

It belongs to the AB hydrolase superfamily. Lipase family. As to quaternary structure, monomer. In terms of processing, glycosylation is not essential for catalytic activity.

It is found in the lysosome. It catalyses the reaction a sterol ester + H2O = a sterol + a fatty acid + H(+). The catalysed reaction is cholesteryl (9Z-octadecenoate) + H2O = cholesterol + (9Z)-octadecenoate + H(+). It carries out the reaction a triacylglycerol + H2O = a 1,2-diacylglycerol + a fatty acid + H(+). The enzyme catalyses 1,2-di-(9Z-octadecenoyl)-glycerol + (9Z)-octadecenoate + H(+) = 1,2,3-tri-(9Z-octadecenoyl)-glycerol + H2O. It catalyses the reaction a 1,2-diacylglycerol + H2O = a 1-acylglycerol + a fatty acid + H(+). The catalysed reaction is 1,2-di-(9Z-octadecenoyl)-glycerol + H2O = 1-(9Z-octadecenoyl)-glycerol + (9Z)-octadecenoate + H(+). It carries out the reaction a 1,3-diacylglycerol + H2O = a 1-acylglycerol + a fatty acid + H(+). The enzyme catalyses 1,3-di-(9Z-octadecenoyl)-glycerol + H2O = 1-(9Z-octadecenoyl)-glycerol + (9Z)-octadecenoate + H(+). Catalyzes the deacylation of cholesteryl ester core lipids of endocytosed low density lipoproteins to generate free fatty acids and cholesterol. Hydrolyzes triglycerides (1,2,3-triacylglycerol) and diglycerides (such as 1,2-diacylglycerol and 1,3-diacylglycerol) with preference for the acyl moieties at the sn-1 or sn-3 positions. The protein is Lysosomal acid lipase/cholesteryl ester hydrolase (Lipa) of Rattus norvegicus (Rat).